The primary structure comprises 506 residues: Asparagine--tRNA ligase (506 aa).

The protein belongs to the class-II aminoacyl-tRNA synthetase family. Homodimer.

The protein resides in the cytoplasm. The catalysed reaction is tRNA(Asn) + L-asparagine + ATP = L-asparaginyl-tRNA(Asn) + AMP + diphosphate + H(+). The sequence is that of Asparagine--tRNA ligase from Onion yellows phytoplasma (strain OY-M).